A 1429-amino-acid chain; its full sequence is Autophagy-related protein 11 (1429 aa).

Coiled-coil stretches lie at residues Gly540–Ala579, Glu616–His808, Thr842–Ser985, and Arg1106–Asp1135. The segment at His574–Met622 is disordered. Polar residues predominate over residues Arg575–Gln592. Residues Ser606–Glu616 are compositionally biased toward basic and acidic residues. Disordered regions lie at residues Ser1205–Asn1224 and Arg1333–Arg1405. Polar residues-rich tracts occupy residues Lys1206–Glu1215 and Arg1333–Asn1362. Basic and acidic residues predominate over residues Lys1384–Ser1398.

The protein belongs to the ATG11 family. As to quaternary structure, homodimer and potential homooligomers. Interacts with ATG1 kinase and the ATG19 and ATG34 cargo protein transporters. Interacts with ATG9, ATG17 and ATG20.

The protein localises to the preautophagosomal structure membrane. Its subcellular location is the vacuole membrane. Involved in cytoplasm to vacuole transport (Cvt), pexophagy, mitophagy and nucleophagy. Recruits mitochondria for their selective degradation via autophagy (mitophagy) during starvation, through its interaction with ATG32. Works as scaffold proteins that recruit ATG proteins to the pre-autophagosome (PAS), the site of vesicle/autophagosome formation. Required for ATG9 anterograde transport from the mitochondria to the PAS. Also recruits the ATG19-prAPE1 complex to the PAS. Required for the Cvt vesicles completion. Autophagy is required for proper vegetative growth, asexual/sexual reproduction, and full virulence. Autophagy is particularly involved in the biosynthesis of deoxynivalenol (DON), an important virulence determinant. The sequence is that of Autophagy-related protein 11 from Gibberella zeae (strain ATCC MYA-4620 / CBS 123657 / FGSC 9075 / NRRL 31084 / PH-1) (Wheat head blight fungus).